Here is a 174-residue protein sequence, read N- to C-terminus: Methylated-DNA--protein-cysteine methyltransferase (174 aa).

Cys-141 serves as the catalytic Nucleophile; methyl group acceptor.

Belongs to the MGMT family.

Its subcellular location is the cytoplasm. The catalysed reaction is a 6-O-methyl-2'-deoxyguanosine in DNA + L-cysteinyl-[protein] = S-methyl-L-cysteinyl-[protein] + a 2'-deoxyguanosine in DNA. It carries out the reaction a 4-O-methyl-thymidine in DNA + L-cysteinyl-[protein] = a thymidine in DNA + S-methyl-L-cysteinyl-[protein]. In terms of biological role, involved in the cellular defense against the biological effects of O6-methylguanine (O6-MeG) and O4-methylthymine (O4-MeT) in DNA. Repairs the methylated nucleobase in DNA by stoichiometrically transferring the methyl group to a cysteine residue in the enzyme. This is a suicide reaction: the enzyme is irreversibly inactivated. In Thermococcus gammatolerans (strain DSM 15229 / JCM 11827 / EJ3), this protein is Methylated-DNA--protein-cysteine methyltransferase.